The sequence spans 707 residues: Solute carrier family 15 member 1 (707 aa).

The chain crosses the membrane as a helical span at residues 1–21 (MGMSKSLSCFGYPLSIFFIVV). Topologically, residues 22–53 (NEFCERFSYYGMRALLILYFRNFIGWDDNLST) are extracellular. The N-linked (GlcNAc...) asparagine glycan is linked to Asn-50. Residues 54–74 (VIYHTFVALCYLTPILGALIA) traverse the membrane as a helical segment. At 75-82 (DAWLGKFK) the chain is on the cytoplasmic side. Residues 83–103 (TIVWLSIVYTIGQAVTSLSSV) form a helical membrane-spanning segment. The Extracellular segment spans residues 104-118 (NELTDNNHDGTPDSL). The helical transmembrane segment at 119–139 (PVHVAVCMIGLLLIALGTGGI) threads the bilayer. The Cytoplasmic portion of the chain corresponds to 140-161 (KPCVSAFGGDQFEEGQEKQRNR). A helical transmembrane segment spans residues 162-182 (FFSIFYLAINAGSLLSTIITP). Topologically, residues 183-198 (MVRVQQCGIHVKQACY) are extracellular. Residues 199-219 (PLAFGIPAILMAVSLIVFIIG) form a helical membrane-spanning segment. The Cytoplasmic portion of the chain corresponds to 220–276 (SGMYKKFKPQGNILSKVVKCICFAIKNRFRHRSKQFPKRAHWLDWAKEKYDERLIAQ). Residues 277–297 (IKMVTRVLFLYIPLPMFWALF) form a helical membrane-spanning segment. The Extracellular portion of the chain corresponds to 298 to 327 (DQQGSRWTLQATTMSGRIGILEIQPDQMQT). The chain crosses the membrane as a helical span at residues 328–348 (VNTILIIILVPIMDAVVYPLI). The Cytoplasmic segment spans residues 349–361 (AKCGLNFTSLKKM). A helical transmembrane segment spans residues 362 to 382 (TIGMFLASMAFVAAAILQVEI). Over 383–583 (DKTLPVFPKA…PPNTMNMAWQ (201 aa)) the chain is Extracellular. The extracellular domain (ECD) stretch occupies residues 383-583 (DKTLPVFPKA…PPNTMNMAWQ (201 aa)). N-linked (GlcNAc...) asparagine glycans are attached at residues Asn-439, Asn-498, and Asn-513. Residues 584-604 (IPQYFLITSGEVVFSITGLEF) traverse the membrane as a helical segment. Residues 605–618 (SYSQAPSNMKSVLQ) lie on the Cytoplasmic side of the membrane. Residues 619–639 (AGWLLTVAVGNIIVLIVAGAG) traverse the membrane as a helical segment. Topologically, residues 640 to 644 (QINKQ) are extracellular. The chain crosses the membrane as a helical span at residues 645–665 (WAEYILFAALLLVVCVIFAIM). At 666-707 (ARFYTYVNPAEIEAQFEEDEKKKNPEKNDLYPSLAPVSQTQM) the chain is on the cytoplasmic side. The tract at residues 682 to 707 (EEDEKKKNPEKNDLYPSLAPVSQTQM) is disordered. The segment covering 684-694 (DEKKKNPEKND) has biased composition (basic and acidic residues).

This sequence belongs to the major facilitator superfamily. Proton-dependent oligopeptide transporter (POT/PTR) (TC 2.A.17) family. In terms of assembly, interacts (via extracellular domain region) with trypsin. As to expression, intestine, kidney, liver and low in brain.

The protein localises to the apical cell membrane. The catalysed reaction is a dipeptide(out) + H(+)(out) = a dipeptide(in) + H(+)(in). It carries out the reaction an L-amino acid tripeptide(out) + H(+)(out) = an L-amino acid tripeptide(in) + H(+)(in). It catalyses the reaction L-alanyl-L-lysine(out) + H(+)(out) = L-alanyl-L-lysine(in) + H(+)(in). The enzyme catalyses L-alanyl-L-proline(out) + H(+)(out) = L-alanyl-L-proline(in) + H(+)(in). The catalysed reaction is L-alanyl-L-valine(out) + H(+)(out) = L-alanyl-L-valine(in) + H(+)(in). It carries out the reaction carnosine(out) + H(+)(out) = carnosine(in) + H(+)(in). It catalyses the reaction glycyl-L-glutamine(out) + H(+)(out) = glycyl-L-glutamine(in) + H(+)(in). The enzyme catalyses glycyl-L-leucine(out) + H(+)(out) = glycyl-L-leucine(in) + H(+)(in). The catalysed reaction is glycyl-L-proline(out) + H(+)(out) = glycyl-L-proline(in) + H(+)(in). It carries out the reaction glycyl-sarcosine(out) + H(+)(out) = glycyl-sarcosine(in) + H(+)(in). It catalyses the reaction L-leucyl-L-leucine(out) + H(+)(out) = L-leucyl-L-leucine(in) + H(+)(in). The enzyme catalyses L-leucyl-L-proline(out) + H(+)(out) = L-leucyl-L-proline(in) + H(+)(in). The catalysed reaction is L-phenylalanyl-L-leucine(out) + H(+)(out) = L-phenylalanyl-L-leucine(in) + H(+)(in). It carries out the reaction L-phenylalanyl-L-phenylalanine(out) + H(+)(out) = L-phenylalanyl-L-phenylalanine(in) + H(+)(in). It catalyses the reaction L-lysyl-glycine(out) + H(+)(out) = L-lysyl-glycine(in) + H(+)(in). The enzyme catalyses L-tyrosylglycine(out) + H(+)(out) = L-tyrosylglycine(in) + H(+)(in). The catalysed reaction is L-alanyl-L-aspartate(out) + 2 H(+)(out) = L-alanyl-L-aspartate(in) + 2 H(+)(in). It carries out the reaction L-aspartyl-glycine(out) + 2 H(+)(out) = L-aspartyl-glycine(in) + 2 H(+)(in). It catalyses the reaction glycyl-L-aspartate(out) + 2 H(+)(out) = glycyl-L-aspartate(in) + 2 H(+)(in). The enzyme catalyses glycyl-L-glutamate(out) + 2 H(+)(out) = glycyl-L-glutamate(in) + 2 H(+)(in). The catalysed reaction is L-alanyl-L-leucyl-L-alanine(out) + H(+)(out) = L-alanyl-L-leucyl-L-alanine(in) + H(+)(in). It carries out the reaction L-alanyl-L-prolylglycine(out) + H(+)(out) = L-alanyl-L-prolylglycine(in) + H(+)(in). It catalyses the reaction glycylglycyl-L-isoleucine(out) + H(+)(out) = glycylglycyl-L-isoleucine(in) + H(+)(in). The enzyme catalyses glycylglycyl-L-proline(out) + H(+)(out) = glycylglycyl-L-proline(in) + H(+)(in). The catalysed reaction is L-methionyl-L-phenylalanyl-L-methionine(out) + H(+)(out) = L-methionyl-L-phenylalanyl-L-methionine(in) + H(+)(in). It carries out the reaction N-acetyl-D-muramoyl-L-alanyl-D-isoglutamine(out) + 2 H(+)(out) = N-acetyl-D-muramoyl-L-alanyl-D-isoglutamine(in) + 2 H(+)(in). It catalyses the reaction N(alpha)-formyl-L-methionyl-L-leucyl-L-phenylalanine(out) + 2 H(+)(out) = N(alpha)-formyl-L-methionyl-L-leucyl-L-phenylalanine(in) + 2 H(+)(in). Functionally, electrogenic proton-coupled amino-acid transporter that transports oligopeptides of 2 to 4 amino acids with a preference for dipeptides. Transports neutral and monovalently charged peptides with a proton to peptide stoichiometry of 1:1 or 2:1. Primarily responsible for the absorption of dietary di- and tripeptides from the small intestinal lumen. Mediates transepithelial transport of muramyl and N-formylated bacterial dipeptides contributing to recognition of pathogenic bacteria by the mucosal immune system. This is Solute carrier family 15 member 1 (SLC15A1) from Oryctolagus cuniculus (Rabbit).